A 499-amino-acid chain; its full sequence is Probable mitochondrial-processing peptidase subunit alpha-2, chloroplastic/mitochondrial (499 aa).

It belongs to the peptidase M16 family. As to quaternary structure, heterodimer of alpha and beta subunits, forming the mitochondrial processing protease (MPP) in which subunit alpha is involved in substrate recognition and binding and subunit beta is the catalytic subunit. Component of the ubiquinol-cytochrome c oxidoreductase (cytochrome b-c1 complex, complex III, CIII), a multisubunit enzyme composed of 10 subunits. The complex is composed of 3 respiratory subunits cytochrome b (MT-CYB), cytochrome c1 (CYC1-1 or CYC1-2) and Rieske protein (UCR1-1 or UCR1-2), 2 core protein subunits MPPalpha1 (or MPPalpha2) and MPPB, and 5 low-molecular weight protein subunits QCR7-1 (or QCR7-2), UCRQ-1 (or UCRQ-2), QCR9, UCRY and probably QCR6-1 (or QCR6-2). The complex exists as an obligatory dimer and forms supercomplexes (SCs) in the inner mitochondrial membrane with NADH-ubiquinone oxidoreductase (complex I, CI), resulting in different assemblies (supercomplexes SCI(1)III(2) and SCI(2)III(4)). Interacts with TIM23-2.

It is found in the plastid. The protein localises to the chloroplast stroma. It localises to the mitochondrion matrix. The protein resides in the mitochondrion inner membrane. Substrate recognition and binding subunit of the essential mitochondrial processing protease (MPP), which cleaves the mitochondrial sequence off newly imported precursors proteins. In terms of biological role, component of the ubiquinol-cytochrome c oxidoreductase, a multisubunit transmembrane complex that is part of the mitochondrial electron transport chain which drives oxidative phosphorylation. The respiratory chain contains 3 multisubunit complexes succinate dehydrogenase (complex II, CII), ubiquinol-cytochrome c oxidoreductase (cytochrome b-c1 complex, complex III, CIII) and cytochrome c oxidase (complex IV, CIV), that cooperate to transfer electrons derived from NADH and succinate to molecular oxygen, creating an electrochemical gradient over the inner membrane that drives transmembrane transport and the ATP synthase. The cytochrome b-c1 complex catalyzes electron transfer from ubiquinol to cytochrome c, linking this redox reaction to translocation of protons across the mitochondrial inner membrane, with protons being carried across the membrane as hydrogens on the quinol. In the process called Q cycle, 2 protons are consumed from the matrix, 4 protons are released into the intermembrane space and 2 electrons are passed to cytochrome c. This chain is Probable mitochondrial-processing peptidase subunit alpha-2, chloroplastic/mitochondrial (MPPalpha2), found in Arabidopsis thaliana (Mouse-ear cress).